Consider the following 210-residue polypeptide: Large ribosomal subunit protein bL17 (210 aa).

Positions 177 to 210 (TRSAQRPAFEQDAPESDSAPEAEAKTEEETASAN) are disordered.

The protein belongs to the bacterial ribosomal protein bL17 family. In terms of assembly, part of the 50S ribosomal subunit. Contacts protein L32.

This chain is Large ribosomal subunit protein bL17, found in Rhodopirellula baltica (strain DSM 10527 / NCIMB 13988 / SH1).